The chain runs to 313 residues: Ribosomal RNA small subunit methyltransferase H (313 aa).

S-adenosyl-L-methionine is bound by residues 35–37, aspartate 55, phenylalanine 79, aspartate 100, and glutamine 107; that span reads GGH.

It belongs to the methyltransferase superfamily. RsmH family.

It is found in the cytoplasm. The enzyme catalyses cytidine(1402) in 16S rRNA + S-adenosyl-L-methionine = N(4)-methylcytidine(1402) in 16S rRNA + S-adenosyl-L-homocysteine + H(+). Specifically methylates the N4 position of cytidine in position 1402 (C1402) of 16S rRNA. The chain is Ribosomal RNA small subunit methyltransferase H from Burkholderia pseudomallei (strain 1106a).